The following is a 1034-amino-acid chain: MISLNNSFFNKRVIVNSFNNYKRSFGTKSQNEESAIVDSNHSFAHTLNLPKTTFSMKANAATREPTLLKDPYKLYKWQLENNKGENWVFHDGPPYANGDLHMGHALNKILKDIVNRYKVLKGFKVNYIPGWDCHGLPIEQQAFKKLKKSSDMKASDIRKIAGDFARKEIEKQSKGFQEMGILGDWENPYKTLDYGYEVEQIQTFYDMFNKGYIYRGVKPVHWSPSSRTALADAELEYNNNHTSKSIFVKFNVKSLSNHILNNLPTTSDINKAEMVISAIIWTTTPWTIPANQAICVNSEMDYILVKPIESEQYRNEMFIISKERLESLTKSFNIGELKVILEFKGEQLKGTITKHPQYDRESPIITGDHVIEGSGTGLVHTAPGHGVEDFQICQQQYPDLKVLSPVNDLGCFTDEVGEKFVGLEVLGDGNEAVINDLETIGSLLHKEDYIHKYPYDWRTKKPIIIRTTLQWFVGLKNIQKTALQSIERVNMVPPSGSNRLSSMIGKRTDWCISRQRVWGCPIPVLYNCKTNEPLINDESINHIKELFGKFGSDCWFEMSTQQLLPPSLKDQHENFVKGTDTMDVWFDSGTSWRGVLVERGIIDKDTGRADIYLEGSDQHRGWFQSSLLTSVCVRDIEPYKNVVTHGFLLDESGIKMSKSIGNTIVPSTVIKGGPNKVQNPPYGVDLLRTWVASSDYSKDISIGPNILIKILDGIKKIRNTLRFMLASNFDFDPTIHAIPYEKLSSLDKYALHRVFKLQESVTRHYDQFQFQKVHTEIINFSIEISSFYFDVIKRHLYAESPNSHSRRSTQTVLFKMLDVINIALAPITVHTSEDVFLHQYQFKNNGKGLDKNLIENSVFAHGWDQLPSQYENELISNQFTNIIAIRDVVNRVLQSMRSQGIIGRSDETIMELTVTNEESSPFYDNLFAINSQLDDIFCVSNVLLKKFNTFEKDVEQQQQQQQQQQQQQPQQIEPNSKGEFIFNTIISNNSKQLGRIEVLLKISDKFKCPRCWRHTSIENDKVCKPCDSVLNSLK.

A mitochondrion-targeting transit peptide spans 1-32 (MISLNNSFFNKRVIVNSFNNYKRSFGTKSQNE). The 'HIGH' region signature appears at 94 to 104 (PYANGDLHMGH). Residues 655–659 (KMSKS) carry the 'KMSKS' region motif. ATP is bound at residue Lys658.

The protein belongs to the class-I aminoacyl-tRNA synthetase family.

It localises to the mitochondrion matrix. The enzyme catalyses tRNA(Ile) + L-isoleucine + ATP = L-isoleucyl-tRNA(Ile) + AMP + diphosphate. The polypeptide is Probable isoleucine--tRNA ligase, mitochondrial (mileS) (Dictyostelium discoideum (Social amoeba)).